A 128-amino-acid chain; its full sequence is Small ribosomal subunit protein uS11 (128 aa).

The protein belongs to the universal ribosomal protein uS11 family. Part of the 30S ribosomal subunit. Interacts with proteins S7 and S18. Binds to IF-3.

Its function is as follows. Located on the platform of the 30S subunit, it bridges several disparate RNA helices of the 16S rRNA. Forms part of the Shine-Dalgarno cleft in the 70S ribosome. The sequence is that of Small ribosomal subunit protein uS11 from Chloroherpeton thalassium (strain ATCC 35110 / GB-78).